The following is a 489-amino-acid chain: UDP-N-acetylmuramoyl-L-alanyl-D-glutamate--2,6-diaminopimelate ligase (489 aa).

Ser-30 lines the UDP-N-acetyl-alpha-D-muramoyl-L-alanyl-D-glutamate pocket. Gly-113–Ser-119 serves as a coordination point for ATP. UDP-N-acetyl-alpha-D-muramoyl-L-alanyl-D-glutamate-binding positions include Thr-155–Thr-156, Ser-182, Gln-188, and Arg-190. The residue at position 222 (Lys-222) is an N6-carboxylysine. Meso-2,6-diaminopimelate is bound by residues Arg-388, Asp-412–Arg-415, Gly-463, and Glu-467. The Meso-diaminopimelate recognition motif motif lies at Asp-412 to Arg-415.

The protein belongs to the MurCDEF family. MurE subfamily. Mg(2+) is required as a cofactor. In terms of processing, carboxylation is probably crucial for Mg(2+) binding and, consequently, for the gamma-phosphate positioning of ATP.

The protein localises to the cytoplasm. The enzyme catalyses UDP-N-acetyl-alpha-D-muramoyl-L-alanyl-D-glutamate + meso-2,6-diaminopimelate + ATP = UDP-N-acetyl-alpha-D-muramoyl-L-alanyl-gamma-D-glutamyl-meso-2,6-diaminopimelate + ADP + phosphate + H(+). It participates in cell wall biogenesis; peptidoglycan biosynthesis. Catalyzes the addition of meso-diaminopimelic acid to the nucleotide precursor UDP-N-acetylmuramoyl-L-alanyl-D-glutamate (UMAG) in the biosynthesis of bacterial cell-wall peptidoglycan. The chain is UDP-N-acetylmuramoyl-L-alanyl-D-glutamate--2,6-diaminopimelate ligase from Coxiella burnetii (strain RSA 493 / Nine Mile phase I).